The following is a 32-amino-acid chain: MSDIN-like toxin proprotein 1 (32 aa).

Positions 1 to 10 are excised as a propeptide; it reads MSDINVTRLP. The segment at residues 11–18 is a cross-link (cyclopeptide (Gly-Pro)); that stretch reads GFVPILFP. Residues 19–32 constitute a propeptide that is removed on maturation; that stretch reads CVGDDVNTALTRGE.

This sequence belongs to the MSDIN fungal toxin family. Processed by the macrocyclase-peptidase enzyme POPB to yield a toxic cyclic octapeptide. POPB first removes 10 residues from the N-terminus. Conformational trapping of the remaining peptide forces the enzyme to release this intermediate rather than proceed to macrocyclization. The enzyme rebinds the remaining peptide in a different conformation and catalyzes macrocyclization of the N-terminal 8 residues.

In terms of biological role, probable toxin that belongs to the MSDIN-like toxin family responsible for a large number of food poisoning cases and deaths. The sequence is that of MSDIN-like toxin proprotein 1 from Amanita bisporigera (Destroying angel).